The chain runs to 311 residues: Large ribosomal subunit protein uL22 (311 aa).

Belongs to the universal ribosomal protein uL22 family. Part of the 50S ribosomal subunit.

This protein binds specifically to 23S rRNA; its binding is stimulated by other ribosomal proteins, e.g. L4, L17, and L20. It is important during the early stages of 50S assembly. It makes multiple contacts with different domains of the 23S rRNA in the assembled 50S subunit and ribosome. Functionally, the globular domain of the protein is located near the polypeptide exit tunnel on the outside of the subunit, while an extended beta-hairpin is found that lines the wall of the exit tunnel in the center of the 70S ribosome. This is Large ribosomal subunit protein uL22 (rplV) from Ureaplasma parvum serovar 3 (strain ATCC 27815 / 27 / NCTC 11736).